The primary structure comprises 438 residues: Acyl-CoA dehydrogenase apdG (438 aa).

Belongs to the acyl-CoA dehydrogenase family. The cofactor is FAD.

It functions in the pathway secondary metabolite biosynthesis. In terms of biological role, acyl-CoA dehydrogenase; part of the gene cluster that mediates the biosynthesis of aspyridones. The polyketide-amino acid backbone preaspyridone A is first assembled by the PKS-NRPS hybrid apdA. The assembly of preaspyridone A is initiated by loading of malonyl-CoA onto apdA, followed by decarboxylation to yield the acetyl starter unit. The growing polyketide chain then elongates into a tetraketide. The adpA PKS module catalyzes three Claisen condensations, as well as beta-keto processing and methylation. Alpha-methylation step during polyketide synthesis is a prerequisite and a key checkpoint for chain transfer between PKS and NRPS modules. The downstream NRPS module contains the condensation (C), adenylation (A), and thiolation (T) domains and catalyzes the incorporation of tyrosine via the formation of the L-tyrosinyl-thioester and the amide linkage between L-tyrosinyl-thioester and the tetraketide. The bimodular assembly line is terminated with a reductase (R) domain that facilitates formation and release of the tetramic acid product. Because apdA lacks a designated enoylreductase (ER) domain, the required activity is provided the enoyl reductase apdC. ApdC appears to operate with different stereoselectivity in different PKS cycle. Combined with apdC, apdA is proposed to synthesize preaspyridone A via about 20 enzymatic steps. A number of oxidative steps performed successively by the cytochrome P450 monooxygenases apdE and apdB are required for the conversion of preaspyridone A to aspyridone A. The cytochrome P450 monooxygenase apdE is responsible for the oxidative dephenylation of preaspyridone A. Finally, the predicted FAD-dependent monooxygenase apdD and the acyl-CoA dehydrogenase apdG may be involved in the transformation of aspyridone A into aspyridone B. This chain is Acyl-CoA dehydrogenase apdG, found in Emericella nidulans (strain FGSC A4 / ATCC 38163 / CBS 112.46 / NRRL 194 / M139) (Aspergillus nidulans).